Consider the following 247-residue polypeptide: Cell division protein ZapD (247 aa).

The protein belongs to the ZapD family. Interacts with FtsZ.

It localises to the cytoplasm. Functionally, cell division factor that enhances FtsZ-ring assembly. Directly interacts with FtsZ and promotes bundling of FtsZ protofilaments, with a reduction in FtsZ GTPase activity. The chain is Cell division protein ZapD from Salmonella choleraesuis (strain SC-B67).